Here is a 375-residue protein sequence, read N- to C-terminus: Fluoride export protein 1 (375 aa).

The Cytoplasmic portion of the chain corresponds to 1–11 (MIFNPVISNHK). A helical membrane pass occupies residues 12-32 (LSHYIHVFCTFTTFCILGTET). Residues 33–34 (RQ) lie on the Extracellular side of the membrane. A helical transmembrane segment spans residues 35–55 (AITALSTYTPAFVTAPTVLWS). Topologically, residues 56-79 (NCSSCMLMGIMQSLNAYTWMKDHQ) are cytoplasmic. The chain crosses the membrane as a helical span at residues 80-100 (VLFLGVTTGYCGALSSFSSML). The Extracellular segment spans residues 101-127 (LEMFEHSTNLTNGNIANHTKLPNRAYG). 2 N-linked (GlcNAc...) asparagine glycosylation sites follow: Asn-109 and Asn-117. The chain crosses the membrane as a helical span at residues 128 to 148 (IMEFLSVLLVHLMVSMGSLIF). The Cytoplasmic segment spans residues 149-213 (GRQLGKEVIV…FKKFFDIVDK (65 aa)). A helical transmembrane segment spans residues 214–234 (LAYALAFPLIILFVVLCAYYE). Asn-235 carries N-linked (GlcNAc...) asparagine glycosylation. Over 235–241 (NYSRGKW) the chain is Extracellular. A helical transmembrane segment spans residues 242–262 (TLPCLFGIFAGFLRYWLAEMF). The Cytoplasmic segment spans residues 263–268 (NKTNKK). The helical transmembrane segment at 269–289 (FPLGTFLANVFATLLIGIFTM) threads the bilayer. At 290-310 (VQRGKKHFSTDVPIVNSLNSC) the chain is on the extracellular side. Residues 311–331 (HIVSALISGFCGTLSTISTFI) traverse the membrane as a helical segment. Topologically, residues 332-338 (NEGYKLS) are cytoplasmic. The helical transmembrane segment at 339–359 (FINMLIYYTVSIAISYCLLVI) threads the bilayer. The Extracellular portion of the chain corresponds to 360-375 (TLGSYAWTRGLTNPIC).

The protein belongs to the fluoride channel Fluc/FEX (TC 1.A.43) family.

The protein localises to the cell membrane. The enzyme catalyses fluoride(in) = fluoride(out). In terms of biological role, fluoride channel required for the rapid expulsion of cytoplasmic fluoride. The protein is Fluoride export protein 1 of Saccharomyces cerevisiae (strain ATCC 204508 / S288c) (Baker's yeast).